We begin with the raw amino-acid sequence, 267 residues long: MSTYNWDEKHILTFPEEKVALSTKDVHVYYGKNESIKGIDMQFERNKITALIGPSGSGKSTYLRSLNRMNDTIDIAKVTGQILYRGIDVNRPEINVYEMRKHIGMVFQRPNPFAKSIYRNITFAHERAGVKDKQVLDEIVETSLRQAALWDQVKDDLHKSALTLSGGQQQRLCIARAISVKPDILLMDEPASALDPIATMQLEETMFELKKNFTIIIVTHNMQQAARASDYTGFFYLGDLIEYDKTATIFQNAKLQSTNDYVSGHFG.

The region spanning 21–262 is the ABC transporter domain; it reads LSTKDVHVYY…AKLQSTNDYV (242 aa). Residue 53–60 participates in ATP binding; that stretch reads GPSGSGKS.

The protein belongs to the ABC transporter superfamily. Phosphate importer (TC 3.A.1.7) family. As to quaternary structure, the complex is composed of two ATP-binding proteins (PstB), two transmembrane proteins (PstC and PstA) and a solute-binding protein (PstS).

It localises to the cell membrane. The enzyme catalyses phosphate(out) + ATP + H2O = ADP + 2 phosphate(in) + H(+). In terms of biological role, part of the ABC transporter complex PstSACB involved in phosphate import. Responsible for energy coupling to the transport system. The polypeptide is Phosphate import ATP-binding protein PstB 2 (Streptococcus pneumoniae serotype 4 (strain ATCC BAA-334 / TIGR4)).